A 155-amino-acid chain; its full sequence is Deoxyuridine 5'-triphosphate nucleotidohydrolase (155 aa).

Residues 74–76 (RSG), Asn87, and 91–93 (LID) contribute to the substrate site.

Belongs to the dUTPase family. It depends on Mg(2+) as a cofactor.

It catalyses the reaction dUTP + H2O = dUMP + diphosphate + H(+). The protein operates within pyrimidine metabolism; dUMP biosynthesis; dUMP from dCTP (dUTP route): step 2/2. Functionally, this enzyme is involved in nucleotide metabolism: it produces dUMP, the immediate precursor of thymidine nucleotides and it decreases the intracellular concentration of dUTP so that uracil cannot be incorporated into DNA. This is Deoxyuridine 5'-triphosphate nucleotidohydrolase from Xylella fastidiosa (strain M12).